The following is a 370-amino-acid chain: Putative agmatine deiminase (370 aa).

The Amidino-cysteine intermediate role is filled by cysteine 361.

Belongs to the agmatine deiminase family.

It catalyses the reaction agmatine + H2O = N-carbamoylputrescine + NH4(+). The polypeptide is Putative agmatine deiminase (Shewanella sp. (strain MR-7)).